A 420-amino-acid chain; its full sequence is Ribulose bisphosphate carboxylase (420 aa).

Residue lysine 155 is the Proton acceptor of the active site. Lysine 157 provides a ligand contact to substrate. Mg(2+) is bound by residues lysine 181, aspartate 183, and glutamate 184. Lysine 181 carries the post-translational modification N6-carboxylysine. The active-site Proton acceptor is the histidine 273. Substrate contacts are provided by residues arginine 274, histidine 306, 343-345, and 365-368; these read SGG and QAGG.

This sequence belongs to the RuBisCO large chain family. Type III subfamily. Homodimer or homodecamer. In contrast to form I RuBisCO, the form III RuBisCO is composed solely of large subunits. Mg(2+) is required as a cofactor.

It catalyses the reaction 2 (2R)-3-phosphoglycerate + 2 H(+) = D-ribulose 1,5-bisphosphate + CO2 + H2O. The enzyme catalyses D-ribulose 1,5-bisphosphate + O2 = 2-phosphoglycolate + (2R)-3-phosphoglycerate + 2 H(+). Catalyzes the addition of molecular CO(2) and H(2)O to ribulose 1,5-bisphosphate (RuBP), generating two molecules of 3-phosphoglycerate (3-PGA). Functions in an archaeal AMP degradation pathway, together with AMP phosphorylase and R15P isomerase. The sequence is that of Ribulose bisphosphate carboxylase from Pyrococcus furiosus (strain ATCC 43587 / DSM 3638 / JCM 8422 / Vc1).